A 339-amino-acid polypeptide reads, in one-letter code: Ketol-acid reductoisomerase (NADP(+)) (339 aa).

The 182-residue stretch at 1–182 (MRVYYDRDAD…GGGRAGIIET (182 aa)) folds into the KARI N-terminal Rossmann domain. NADP(+) is bound by residues 24-27 (YGSQ), Arg-48, Ser-51, Ser-53, and 83-86 (DELQ). Residue His-108 is part of the active site. Gly-134 lines the NADP(+) pocket. The KARI C-terminal knotted domain occupies 183–328 (TFKEECETDL…EKLREMMPWI (146 aa)). 4 residues coordinate Mg(2+): Asp-191, Glu-195, Glu-227, and Glu-231. Ser-252 serves as a coordination point for substrate.

The protein belongs to the ketol-acid reductoisomerase family. The cofactor is Mg(2+).

It carries out the reaction (2R)-2,3-dihydroxy-3-methylbutanoate + NADP(+) = (2S)-2-acetolactate + NADPH + H(+). It catalyses the reaction (2R,3R)-2,3-dihydroxy-3-methylpentanoate + NADP(+) = (S)-2-ethyl-2-hydroxy-3-oxobutanoate + NADPH + H(+). It functions in the pathway amino-acid biosynthesis; L-isoleucine biosynthesis; L-isoleucine from 2-oxobutanoate: step 2/4. The protein operates within amino-acid biosynthesis; L-valine biosynthesis; L-valine from pyruvate: step 2/4. Functionally, involved in the biosynthesis of branched-chain amino acids (BCAA). Catalyzes an alkyl-migration followed by a ketol-acid reduction of (S)-2-acetolactate (S2AL) to yield (R)-2,3-dihydroxy-isovalerate. In the isomerase reaction, S2AL is rearranged via a Mg-dependent methyl migration to produce 3-hydroxy-3-methyl-2-ketobutyrate (HMKB). In the reductase reaction, this 2-ketoacid undergoes a metal-dependent reduction by NADPH to yield (R)-2,3-dihydroxy-isovalerate. The protein is Ketol-acid reductoisomerase (NADP(+)) of Azorhizobium caulinodans (strain ATCC 43989 / DSM 5975 / JCM 20966 / LMG 6465 / NBRC 14845 / NCIMB 13405 / ORS 571).